We begin with the raw amino-acid sequence, 53 residues long: Putative defensin-like protein 53 (53 aa).

Cystine bridges form between cysteine 12–cysteine 51, cysteine 16–cysteine 40, cysteine 26–cysteine 49, and cysteine 30–cysteine 50.

This sequence belongs to the DEFL family.

The polypeptide is Putative defensin-like protein 53 (Arabidopsis thaliana (Mouse-ear cress)).